Consider the following 231-residue polypeptide: NADH-ubiquinone oxidoreductase chain 4 (231 aa).

Transmembrane regions (helical) follow at residues 1–21 (PIAGSMVLAAILLKLGGYGII), 34–54 (MFLPFIVLALWGAILANLTCL), 63–85 (IAYSSVSHMGLVVAAIMIQTPWG), 89–111 (AMTLMIAHGFTSSALFCLANTTY), 128–148 (ILPMATTWWLLTNLMNIAIPP), and 156–176 (LLIMSALFSWCPTTIILLGLS).

This sequence belongs to the complex I subunit 4 family.

The protein resides in the mitochondrion membrane. It catalyses the reaction a ubiquinone + NADH + 5 H(+)(in) = a ubiquinol + NAD(+) + 4 H(+)(out). Core subunit of the mitochondrial membrane respiratory chain NADH dehydrogenase (Complex I) that is believed to belong to the minimal assembly required for catalysis. Complex I functions in the transfer of electrons from NADH to the respiratory chain. The immediate electron acceptor for the enzyme is believed to be ubiquinone. The protein is NADH-ubiquinone oxidoreductase chain 4 (MT-ND4) of Gloydius intermedius (Central Asian pit viper).